The primary structure comprises 201 residues: MSGLASLVPMVIEQSSRGERAFDIFSRLLRERIIFINGEINDDVSALVCAQLLSLESDNPDKEISLYINSPGGVVTSGFAIYDTMQYVSCPVSTVCMGFAASMGSFLLMAGTPGRRIALPNATILLHQPLGGFQGQASDIQRHAERIGKTKQRMAELYAQHCGRSYEEVERTLDRDHFMTAREAQTWGIVDHVFDTRKKAA.

The active-site Nucleophile is serine 102. Histidine 127 is an active-site residue.

It belongs to the peptidase S14 family. In terms of assembly, fourteen ClpP subunits assemble into 2 heptameric rings which stack back to back to give a disk-like structure with a central cavity, resembling the structure of eukaryotic proteasomes.

It is found in the cytoplasm. The catalysed reaction is Hydrolysis of proteins to small peptides in the presence of ATP and magnesium. alpha-casein is the usual test substrate. In the absence of ATP, only oligopeptides shorter than five residues are hydrolyzed (such as succinyl-Leu-Tyr-|-NHMec, and Leu-Tyr-Leu-|-Tyr-Trp, in which cleavage of the -Tyr-|-Leu- and -Tyr-|-Trp bonds also occurs).. Cleaves peptides in various proteins in a process that requires ATP hydrolysis. Has a chymotrypsin-like activity. Plays a major role in the degradation of misfolded proteins. In Mesorhizobium japonicum (strain LMG 29417 / CECT 9101 / MAFF 303099) (Mesorhizobium loti (strain MAFF 303099)), this protein is ATP-dependent Clp protease proteolytic subunit 1.